We begin with the raw amino-acid sequence, 135 residues long: S-adenosylmethionine decarboxylase proenzyme (135 aa).

The Schiff-base intermediate with substrate; via pyruvic acid role is filled by Ser-64. A Pyruvic acid (Ser); by autocatalysis modification is found at Ser-64. The active-site Proton acceptor; for processing activity is His-69. Catalysis depends on Cys-84, which acts as the Proton donor; for catalytic activity.

It belongs to the prokaryotic AdoMetDC family. Type 1 subfamily. As to quaternary structure, heterotetramer of two alpha and two beta chains arranged as a dimer of alpha/beta heterodimers. Requires pyruvate as cofactor. In terms of processing, is synthesized initially as an inactive proenzyme. Formation of the active enzyme involves a self-maturation process in which the active site pyruvoyl group is generated from an internal serine residue via an autocatalytic post-translational modification. Two non-identical subunits are generated from the proenzyme in this reaction, and the pyruvate is formed at the N-terminus of the alpha chain, which is derived from the carboxyl end of the proenzyme. The post-translation cleavage follows an unusual pathway, termed non-hydrolytic serinolysis, in which the side chain hydroxyl group of the serine supplies its oxygen atom to form the C-terminus of the beta chain, while the remainder of the serine residue undergoes an oxidative deamination to produce ammonia and the pyruvoyl group blocking the N-terminus of the alpha chain.

The catalysed reaction is S-adenosyl-L-methionine + H(+) = S-adenosyl 3-(methylsulfanyl)propylamine + CO2. It participates in amine and polyamine biosynthesis; S-adenosylmethioninamine biosynthesis; S-adenosylmethioninamine from S-adenosyl-L-methionine: step 1/1. In terms of biological role, catalyzes the decarboxylation of S-adenosylmethionine to S-adenosylmethioninamine (dcAdoMet), the propylamine donor required for the synthesis of the polyamines spermine and spermidine from the diamine putrescine. In Aquifex aeolicus (strain VF5), this protein is S-adenosylmethionine decarboxylase proenzyme.